A 704-amino-acid polypeptide reads, in one-letter code: Elongation factor G (704 aa).

One can recognise a tr-type G domain in the interval 10–290 (NKVRNIGIMA…AVIDYLPSPL (281 aa)). GTP contacts are provided by residues 19–26 (AHIDAGKT), 83–87 (DTPGH), and 137–140 (NKMD).

Belongs to the TRAFAC class translation factor GTPase superfamily. Classic translation factor GTPase family. EF-G/EF-2 subfamily.

It localises to the cytoplasm. In terms of biological role, catalyzes the GTP-dependent ribosomal translocation step during translation elongation. During this step, the ribosome changes from the pre-translocational (PRE) to the post-translocational (POST) state as the newly formed A-site-bound peptidyl-tRNA and P-site-bound deacylated tRNA move to the P and E sites, respectively. Catalyzes the coordinated movement of the two tRNA molecules, the mRNA and conformational changes in the ribosome. This chain is Elongation factor G, found in Clavibacter michiganensis subsp. michiganensis (strain NCPPB 382).